The following is a 511-amino-acid chain: GMP synthase [glutamine-hydrolyzing] (511 aa).

Positions 3 to 198 (SVLVLDFGSQ…LLNIAAITPD (196 aa)) constitute a Glutamine amidotransferase type-1 domain. Cysteine 80 functions as the Nucleophile in the catalytic mechanism. Active-site residues include histidine 172 and glutamate 174. The GMPS ATP-PPase domain maps to 199 to 386 (WSSKSFIEHQ…LGIPEDILMR (188 aa)). 226-232 (SGGVDST) is an ATP binding site.

In terms of assembly, homodimer.

The enzyme catalyses XMP + L-glutamine + ATP + H2O = GMP + L-glutamate + AMP + diphosphate + 2 H(+). The protein operates within purine metabolism; GMP biosynthesis; GMP from XMP (L-Gln route): step 1/1. Its function is as follows. Catalyzes the synthesis of GMP from XMP. The protein is GMP synthase [glutamine-hydrolyzing] of Chlorobium chlorochromatii (strain CaD3).